Consider the following 952-residue polypeptide: Isoleucine--tRNA ligase (952 aa).

The 'HIGH' region signature appears at 58–68; the sequence is PYANGDIHIGH. An L-isoleucyl-5'-AMP-binding site is contributed by Glu576. A 'KMSKS' region motif is present at residues 617-621; that stretch reads KMSKS. Position 620 (Lys620) interacts with ATP. Residues Cys915, Cys918, Cys935, and Cys938 each contribute to the Zn(2+) site.

It belongs to the class-I aminoacyl-tRNA synthetase family. IleS type 1 subfamily. Monomer. The cofactor is Zn(2+).

Its subcellular location is the cytoplasm. It carries out the reaction tRNA(Ile) + L-isoleucine + ATP = L-isoleucyl-tRNA(Ile) + AMP + diphosphate. Functionally, catalyzes the attachment of isoleucine to tRNA(Ile). As IleRS can inadvertently accommodate and process structurally similar amino acids such as valine, to avoid such errors it has two additional distinct tRNA(Ile)-dependent editing activities. One activity is designated as 'pretransfer' editing and involves the hydrolysis of activated Val-AMP. The other activity is designated 'posttransfer' editing and involves deacylation of mischarged Val-tRNA(Ile). The sequence is that of Isoleucine--tRNA ligase from Vibrio atlanticus (strain LGP32) (Vibrio splendidus (strain Mel32)).